Here is a 411-residue protein sequence, read N- to C-terminus: Probable peptidoglycan glycosyltransferase FtsW (411 aa).

Residues 1 to 40 (MLERMLPFLGRKRDKAAADLPVRVGHSAPRNSRMLEYDQN) are Cytoplasmic-facing. Residues 41–61 (LVWVTLLLLAYGLVMVYSATI) traverse the membrane as a helical segment. At 62-81 (SFHDSPRYAQWSPYHYFIRD) the chain is on the periplasmic side. A helical membrane pass occupies residues 82 to 102 (LFSIAAALLASWIVVQIPMAE). Topologically, residues 103-109 (LQKWSMR) are cytoplasmic. A helical membrane pass occupies residues 110 to 130 (FFFLSLIGLVLVLLPHIGKDV). Over 131–136 (NGSKRW) the chain is Periplasmic. The helical transmembrane segment at 137-157 (VVFPGGLNFQPSELVKLTALI) threads the bilayer. Residues 158–172 (YAADFMVRKQEVKQS) lie on the Cytoplasmic side of the membrane. A helical membrane pass occupies residues 173-193 (LLKTFLPMMAVMMIVGVLLLA). At 194–196 (EPD) the chain is on the periplasmic side. Residues 197–217 (MGAFLVIASITLAILFLGGAN) traverse the membrane as a helical segment. Topologically, residues 218–219 (GK) are cytoplasmic. A helical transmembrane segment spans residues 220–240 (LFSVFSVAVIGAFVLMIVLSP). Residues 241–298 (WRRDRIFAYLNPWSESNALGSAYQLSHALIAMGRGEWFGVGLGGSIEKLHYLPEAHTD) are Periplasmic-facing. A helical membrane pass occupies residues 299-319 (FLLAIIGEELGLVGVGVVIFA). Topologically, residues 320–347 (FYWIVRRAFDIGRQALVLDRMYSALVAQ) are cytoplasmic. A helical transmembrane segment spans residues 348 to 368 (GIGVWIGGQAFINIGVNLGLL). Over 369 to 374 (PTKGLT) the chain is Periplasmic. Residues 375–395 (LPLMSYGGSALLLNCMAIAVL) traverse the membrane as a helical segment. Topologically, residues 396-411 (LRVDFENRILMRGGHV) are cytoplasmic.

It belongs to the SEDS family. FtsW subfamily.

Its subcellular location is the cell inner membrane. The catalysed reaction is [GlcNAc-(1-&gt;4)-Mur2Ac(oyl-L-Ala-gamma-D-Glu-L-Lys-D-Ala-D-Ala)](n)-di-trans,octa-cis-undecaprenyl diphosphate + beta-D-GlcNAc-(1-&gt;4)-Mur2Ac(oyl-L-Ala-gamma-D-Glu-L-Lys-D-Ala-D-Ala)-di-trans,octa-cis-undecaprenyl diphosphate = [GlcNAc-(1-&gt;4)-Mur2Ac(oyl-L-Ala-gamma-D-Glu-L-Lys-D-Ala-D-Ala)](n+1)-di-trans,octa-cis-undecaprenyl diphosphate + di-trans,octa-cis-undecaprenyl diphosphate + H(+). The protein operates within cell wall biogenesis; peptidoglycan biosynthesis. Its function is as follows. Peptidoglycan polymerase that is essential for cell division. The sequence is that of Probable peptidoglycan glycosyltransferase FtsW from Thiomonas intermedia (strain K12) (Thiobacillus intermedius).